A 700-amino-acid chain; its full sequence is Glycine--tRNA ligase beta subunit (700 aa).

This sequence belongs to the class-II aminoacyl-tRNA synthetase family. In terms of assembly, tetramer of two alpha and two beta subunits.

It is found in the cytoplasm. The catalysed reaction is tRNA(Gly) + glycine + ATP = glycyl-tRNA(Gly) + AMP + diphosphate. The sequence is that of Glycine--tRNA ligase beta subunit from Helicobacter pylori (strain Shi470).